We begin with the raw amino-acid sequence, 155 residues long: MHCPFCNQTDTKVIDSRLVADGVQVRRRRECQACHERFTTFETAELLMPKVIKQDGTREPFDEEKLRNGLQRALEKRPVSVEAIETALHNVRHYLQALGEREIKSLVIGEKVMEELQNLDQVAYVRFASVYRSFQDISEFRAEIDRLQKKPDETA.

A zinc finger lies at 3–34 (CPFCNQTDTKVIDSRLVADGVQVRRRRECQAC). Residues 49–139 (PKVIKQDGTR…VYRSFQDISE (91 aa)) form the ATP-cone domain.

It belongs to the NrdR family. It depends on Zn(2+) as a cofactor.

Its function is as follows. Negatively regulates transcription of bacterial ribonucleotide reductase nrd genes and operons by binding to NrdR-boxes. This chain is Transcriptional repressor NrdR, found in Teredinibacter turnerae (strain ATCC 39867 / T7901).